The primary structure comprises 2190 residues: Non-reducing polyketide synthase mapC' (2190 aa).

An N-terminal acylcarrier protein transacylase domain (SAT) region spans residues 14 to 268 (VLFGPQCPDI…HHEAHREGIQ (255 aa)). Residues 401–817 (ASPIAITGMA…GSNAALIVKE (417 aa)) form the Ketosynthase family 3 (KS3) domain. Catalysis depends on for beta-ketoacyl synthase activity residues cysteine 566, histidine 701, and histidine 740. The malonyl-CoA:ACP transacylase (MAT) domain stretch occupies residues 893 to 1190 (CFGGQNGLTA…NVTSALWAQG (298 aa)). The active-site For acyl/malonyl transferase activity is serine 979. The segment at 1243 to 1375 (GQEAGLLCQL…GTVCLHQERS (133 aa)) is N-terminal hotdog fold. One can recognise a PKS/mFAS DH domain in the interval 1243 to 1552 (GQEAGLLCQL…FTSVSIRSLT (310 aa)). The interval 1251–1556 (QLSESPDERL…SIRSLTRALA (306 aa)) is product template (PT) domain. Histidine 1277 acts as the Proton acceptor; for dehydratase activity in catalysis. The segment at 1401–1552 (ASNGLKGSTV…FTSVSIRSLT (152 aa)) is C-terminal hotdog fold. The Proton donor; for dehydratase activity role is filled by aspartate 1458. Residues 1597-1671 (ANDLATVQEM…GLVEHIFPGH (75 aa)) form the Carrier domain. O-(pantetheine 4'-phosphoryl)serine is present on serine 1631. The methyltransferase (CMeT) domain stretch occupies residues 1840 to 2187 (ATMSPSKPIK…AEGYEFLRTH (348 aa)). Residues serine 1969, aspartate 2127, and histidine 2159 each act as for thioesterase activity in the active site.

The protein resides in the cytoplasm. It localises to the cytosol. The catalysed reaction is 3 malonyl-CoA + acetyl-CoA + S-adenosyl-L-methionine + H(+) = 5-methylorsellinate + S-adenosyl-L-homocysteine + 3 CO2 + 4 CoA. The protein operates within secondary metabolite biosynthesis; terpenoid biosynthesis. Non-reducing polyketide synthase; part of the gene cluster that mediates the biosynthesis of mycophenolic acid (MPA), the first isolated antibiotic natural product in the world obtained from a culture of Penicillium brevicompactum in 1893. MpaC' catalyzes the synthesis of 5-methylorsellinic acid (5MOA) via the condensation of 1 acetyl-CoA starter unit with 3 malonyl-CoA units and one methylation step. The first step of the pathway is the synthesis of 5-methylorsellinic acid (5MOA) by the cytosolic polyketide synthase mpaC. 5MOA is then converted to the phthalide compound 5,7-dihydroxy-4,6-dimethylphthalide (DHMP) by the endoplasmic reticulum-bound cytochrome P450 monooxygenase mpaDE. MpaDE first catalyzes hydroxylation of 5-MOA to 4,6-dihydroxy-2-(hydroxymethyl)-3-methylbenzoic acid (DHMB). MpaDE then acts as a lactone synthase that catalyzes the ring closure to convert DHMB into DHMP. The next step is the prenylation of DHMP by the Golgi apparatus-associated prenyltransferase mpaA to yield farnesyl-DHMP (FDHMP). The ER-bound oxygenase mpaB then mediates the oxidative cleavage the C19-C20 double bond in FDHMP to yield FDHMP-3C via a mycophenolic aldehyde intermediate. The O-methyltransferase mpaG catalyzes the methylation of FDHMP-3C to yield MFDHMP-3C. After the cytosolic methylation of FDHMP-3C, MFDHMP-3C enters into peroxisomes probably via free diffusion due to its low molecular weight. Upon a peroxisomal CoA ligation reaction, catalyzed by a beta-oxidation component enzyme acyl-CoA ligase ACL891, MFDHMP-3C-CoA would then be restricted to peroxisomes for the following beta-oxidation pathway steps. The peroxisomal beta-oxidation machinery than converts MFDHMP-3C-CoA into MPA_CoA, via a beta-oxidation chain-shortening process. Finally mpaH acts as a peroxisomal acyl-CoA hydrolase with high substrate specificity toward MPA-CoA to release the final product MPA. The chain is Non-reducing polyketide synthase mapC' from Penicillium brevicompactum.